A 188-amino-acid chain; its full sequence is Elongation factor P (188 aa).

This sequence belongs to the elongation factor P family.

It is found in the cytoplasm. Its pathway is protein biosynthesis; polypeptide chain elongation. Its function is as follows. Involved in peptide bond synthesis. Stimulates efficient translation and peptide-bond synthesis on native or reconstituted 70S ribosomes in vitro. Probably functions indirectly by altering the affinity of the ribosome for aminoacyl-tRNA, thus increasing their reactivity as acceptors for peptidyl transferase. The polypeptide is Elongation factor P (Stutzerimonas stutzeri (strain A1501) (Pseudomonas stutzeri)).